The chain runs to 437 residues: ATP-dependent protease ATPase subunit HslU (437 aa).

ATP-binding positions include valine 18, 60–65, aspartate 250, glutamate 315, and arginine 387; that span reads GCGKTE.

Belongs to the ClpX chaperone family. HslU subfamily. A double ring-shaped homohexamer of HslV is capped on each side by a ring-shaped HslU homohexamer. The assembly of the HslU/HslV complex is dependent on binding of ATP.

It is found in the cytoplasm. ATPase subunit of a proteasome-like degradation complex; this subunit has chaperone activity. The binding of ATP and its subsequent hydrolysis by HslU are essential for unfolding of protein substrates subsequently hydrolyzed by HslV. HslU recognizes the N-terminal part of its protein substrates and unfolds these before they are guided to HslV for hydrolysis. The sequence is that of ATP-dependent protease ATPase subunit HslU from Methylorubrum extorquens (strain PA1) (Methylobacterium extorquens).